The sequence spans 530 residues: MPMSLGNAFIKNFLGKAPDWYKVAIIAFLIINPIVFFFINPFLAGWLLVVEFIFTLAMALKCYPLQPGGLLAIEAIAIGMTSPGQVKHELVANIEVLLLLVFMVAGIYFMKQLLLFIFTKILLGIRSKVLLSIAFSVTAAFLSAFLDALTVIAVIISVAVGFYSIYHKVASGQSVHSSHDHTHDEGISELTRDDLENYRAFLRSLLMHAGVGTALGGVTTMVGEPQNLIIADQAGWQFGEFLLRMAPVTVPVFIAGMLTCMLVEKFRIFGYGARLPANVRQILLDFDSEERKNRTNQDVAKLWVQGAIAVWLIVGLALHLAAVGLIGLSVIILATAFTGVIEEHSLGKAFEEALPFTALLAVFFSIVAVIIDQELFKPVIDAVLNVEDHGTQLALFYVANGLLSMVSDNVFVGTVYITEVKTALMEGMISRDQFDLLAVAINTGTNLPSVATPNGQAAFLFLLTSALAPLIRLSYGRMVIMAFPYTLALSLVGFIGIMFLLEPMTEVFYSLGWISHHVAPAADALLQSGH.

Transmembrane regions (helical) follow at residues 23–43 (VAII…NPFL), 45–65 (GWLL…CYPL), 90–110 (LVAN…IYFM), 113–133 (LLLF…LLSI), 140–160 (AFLS…SVAV), 205–225 (LLMH…VGEP), 238–258 (FGEF…AGML), 308–328 (IAVW…LIGL), 351–371 (EEAL…AVII), 451–471 (ATPN…APLI), and 479–499 (VIMA…GIMF).

The protein belongs to the NhaB Na(+)/H(+) (TC 2.A.34) antiporter family.

It localises to the cell inner membrane. It catalyses the reaction 2 Na(+)(in) + 3 H(+)(out) = 2 Na(+)(out) + 3 H(+)(in). Its function is as follows. Na(+)/H(+) antiporter that extrudes sodium in exchange for external protons. This Vibrio cholerae serotype O1 (strain ATCC 39541 / Classical Ogawa 395 / O395) protein is Na(+)/H(+) antiporter NhaB.